A 64-amino-acid polypeptide reads, in one-letter code: Conotoxin Am1.1 (64 aa).

The signal sequence occupies residues 1–22 (MSCLPVFVILLLLTASGPSVDA). Positions 23–49 (RLKTKDDVPLSSFRDNAKSTLRRLQDK) are excised as a propeptide. The residue at position 60 (Pro60) is a 4-hydroxyproline; partial; in major form.

This sequence belongs to the conotoxin T superfamily. In terms of processing, contains 2 disulfide bonds. Expressed by the venom duct.

It localises to the secreted. In terms of biological role, probable toxin that inhibits ion channels. This chain is Conotoxin Am1.1, found in Conus amadis (Amadis cone).